A 797-amino-acid chain; its full sequence is Methionine--tRNA ligase, cytoplasmic (797 aa).

The 'HIGH' region signature appears at 26 to 36 (PYVNNVPHLGN). The short motif at 348 to 352 (KFSKS) is the 'KMSKS' region element. K351 contacts ATP. The segment at 601–634 (DQLNKTKLSDAKKQKASSKGGGKPKPQPAADREI) is disordered. Positions 635–738 (TMARLDIRVG…KTANIGERVT (104 aa)) constitute a tRNA-binding domain.

This sequence belongs to the class-I aminoacyl-tRNA synthetase family.

It localises to the cytoplasm. Its subcellular location is the cytosol. The catalysed reaction is tRNA(Met) + L-methionine + ATP = L-methionyl-tRNA(Met) + AMP + diphosphate. The sequence is that of Methionine--tRNA ligase, cytoplasmic from Arabidopsis thaliana (Mouse-ear cress).